Consider the following 321-residue polypeptide: Manganese-dependent ADP-ribose/CDP-alcohol diphosphatase (321 aa).

The Zn(2+) site is built by Asp25, Gln27, Asp72, Asn107, His226, His263, and His265.

Belongs to the ADPRibase-Mn family. In terms of assembly, monomer. Requires Mg(2+) as cofactor.

The enzyme catalyses CDP-choline + H2O = phosphocholine + CMP + 2 H(+). It carries out the reaction ADP-D-ribose + H2O = D-ribose 5-phosphate + AMP + 2 H(+). The catalysed reaction is CDP-glycerol + H2O = sn-glycerol 3-phosphate + CMP + 2 H(+). In terms of biological role, hydrolyzes ADP-ribose, IDP-ribose, CDP-glycerol, CDP-choline and CDP-ethanolamine, but not other non-reducing ADP-sugars or CDP-glucose. This Oryza sativa subsp. japonica (Rice) protein is Manganese-dependent ADP-ribose/CDP-alcohol diphosphatase.